Consider the following 143-residue polypeptide: Spliceosomal protein DIB1 (143 aa).

This sequence belongs to the DIM1 family. In terms of assembly, component of the 25S [U4/U6.U5] tri-snRNP.

Its subcellular location is the nucleus. Its function is as follows. Essential role in pre-mRNA splicing. Also essential for entry into mitosis (G2/M progression) as well as for chromosome segregation during mitosis. The sequence is that of Spliceosomal protein DIB1 (DIB1) from Eremothecium gossypii (strain ATCC 10895 / CBS 109.51 / FGSC 9923 / NRRL Y-1056) (Yeast).